A 345-amino-acid polypeptide reads, in one-letter code: uncharacterized protein (345 aa).

This sequence belongs to the methyltransferase superfamily.

This is an uncharacterized protein from Streptomyces fradiae (Streptomyces roseoflavus).